The chain runs to 242 residues: Proteasome subunit alpha (242 aa).

This sequence belongs to the peptidase T1A family. The 20S proteasome core is composed of 14 alpha and 14 beta subunits that assemble into four stacked heptameric rings, resulting in a barrel-shaped structure. The two inner rings, each composed of seven catalytic beta subunits, are sandwiched by two outer rings, each composed of seven alpha subunits. The catalytic chamber with the active sites is on the inside of the barrel. Has a gated structure, the ends of the cylinder being occluded by the N-termini of the alpha-subunits. Is capped at one or both ends by the proteasome regulatory ATPase, PAN.

It localises to the cytoplasm. Its activity is regulated as follows. The formation of the proteasomal ATPase PAN-20S proteasome complex, via the docking of the C-termini of PAN into the intersubunit pockets in the alpha-rings, triggers opening of the gate for substrate entry. Interconversion between the open-gate and close-gate conformations leads to a dynamic regulation of the 20S proteasome proteolysis activity. Functionally, component of the proteasome core, a large protease complex with broad specificity involved in protein degradation. The polypeptide is Proteasome subunit alpha (Sulfurisphaera tokodaii (strain DSM 16993 / JCM 10545 / NBRC 100140 / 7) (Sulfolobus tokodaii)).